Reading from the N-terminus, the 853-residue chain is Stachyose synthase (853 aa).

Positions methionine 1–asparagine 11 are excised as a propeptide.

It belongs to the glycosyl hydrolases 36 family.

It is found in the cytoplasm. It carries out the reaction alpha-D-galactosyl-(1-&gt;3)-1D-myo-inositol + raffinose = stachyose + myo-inositol. It functions in the pathway glycan metabolism; stachyose biosynthesis; stachyose from raffinose: step 1/1. Its function is as follows. Catalyzes stachyose synthesis by transfer of a galactosyl moiety from galactinol to raffinose. Also catalyzes verbascose synthesis by galactosyl transfer from galactinol to stachyose or from one stachyose molecule to another. Oligosaccharides of the raffinose family play a protective role in maturation drying of seeds. They may act as cryoprotectants in frost-hardy plants. The chain is Stachyose synthase (STS1) from Pisum sativum (Garden pea).